A 450-amino-acid chain; its full sequence is UDP-N-acetylmuramoylalanine--D-glutamate ligase (450 aa).

119-125 (GSNGKTT) lines the ATP pocket.

This sequence belongs to the MurCDEF family.

It localises to the cytoplasm. It catalyses the reaction UDP-N-acetyl-alpha-D-muramoyl-L-alanine + D-glutamate + ATP = UDP-N-acetyl-alpha-D-muramoyl-L-alanyl-D-glutamate + ADP + phosphate + H(+). It functions in the pathway cell wall biogenesis; peptidoglycan biosynthesis. Cell wall formation. Catalyzes the addition of glutamate to the nucleotide precursor UDP-N-acetylmuramoyl-L-alanine (UMA). This chain is UDP-N-acetylmuramoylalanine--D-glutamate ligase, found in Streptococcus pneumoniae (strain Taiwan19F-14).